The following is a 391-amino-acid chain: Putative F-box protein At1g47730 (391 aa).

A compositionally biased stretch (basic and acidic residues) spans 1–12 (MEQREEKTENIQ). Residues 1 to 25 (MEQREEKTENIQRKRSRGKSSSSSL) are disordered. Positions 19–68 (KSSSSSLPLDLTSEIFSRLPAKSVVRFRCVSKLWSSITTAPYFTNSFETR) constitute an F-box domain.

In Arabidopsis thaliana (Mouse-ear cress), this protein is Putative F-box protein At1g47730.